We begin with the raw amino-acid sequence, 211 residues long: ATP phosphoribosyltransferase (211 aa).

This sequence belongs to the ATP phosphoribosyltransferase family. Short subfamily. Heteromultimer composed of HisG and HisZ subunits.

It localises to the cytoplasm. It catalyses the reaction 1-(5-phospho-beta-D-ribosyl)-ATP + diphosphate = 5-phospho-alpha-D-ribose 1-diphosphate + ATP. It participates in amino-acid biosynthesis; L-histidine biosynthesis; L-histidine from 5-phospho-alpha-D-ribose 1-diphosphate: step 1/9. Its function is as follows. Catalyzes the condensation of ATP and 5-phosphoribose 1-diphosphate to form N'-(5'-phosphoribosyl)-ATP (PR-ATP). Has a crucial role in the pathway because the rate of histidine biosynthesis seems to be controlled primarily by regulation of HisG enzymatic activity. The sequence is that of ATP phosphoribosyltransferase from Pseudomonas syringae pv. syringae (strain B728a).